We begin with the raw amino-acid sequence, 97 residues long: Signal recognition particle 19 kDa protein (97 aa).

It belongs to the SRP19 family. Part of the signal recognition particle protein translocation system, which is composed of SRP and FtsY. Archaeal SRP consists of a 7S RNA molecule of 300 nucleotides and two protein subunits: SRP54 and SRP19.

Its subcellular location is the cytoplasm. In terms of biological role, involved in targeting and insertion of nascent membrane proteins into the cytoplasmic membrane. Binds directly to 7S RNA and mediates binding of the 54 kDa subunit of the SRP. This is Signal recognition particle 19 kDa protein from Methanocella arvoryzae (strain DSM 22066 / NBRC 105507 / MRE50).